Consider the following 734-residue polypeptide: Photosystem I P700 chlorophyll a apoprotein A2 (734 aa).

The next 8 membrane-spanning stretches (helical) occupy residues 46–69 (IFASHFGQLAIIFLWTSGNLFHVA), 135–158 (LYTGALFLLFLSAISLIAGWLHLQ), 175–199 (LNHHLSGLFGVSSLAWTGHLVHVAI), 273–291 (IAHHHLAIAFLFLVAGHMY), 330–353 (IHFQLGLALASLGVITSLVAQHMY), 369–395 (AALYTHHQYIAGFIMTGAFAHGAIFFI), 417–439 (AIISHLSWVSLFLGFHTLGLYVH), and 517–535 (FLVHHAIALGLHTTTLILV). Residues Cys-559 and Cys-568 each contribute to the [4Fe-4S] cluster site. 2 consecutive transmembrane segments (helical) span residues 575 to 596 (AFYLAVFWMLNTIGWVTFYWHW) and 643 to 665 (LSVWAWMFLFGHLVWATGFMFLI). 3 residues coordinate chlorophyll a: His-654, Met-662, and Tyr-670. Residue Trp-671 coordinates phylloquinone. Residues 707–727 (LVGLAHFSVGYIFTYAAFLIA) traverse the membrane as a helical segment.

This sequence belongs to the PsaA/PsaB family. The PsaA/B heterodimer binds the P700 chlorophyll special pair and subsequent electron acceptors. PSI consists of a core antenna complex that captures photons, and an electron transfer chain that converts photonic excitation into a charge separation. The eukaryotic PSI reaction center is composed of at least 11 subunits. P700 is a chlorophyll a/chlorophyll a' dimer, A0 is one or more chlorophyll a, A1 is one or both phylloquinones and FX is a shared 4Fe-4S iron-sulfur center. is required as a cofactor.

The protein localises to the plastid. The protein resides in the chloroplast thylakoid membrane. The catalysed reaction is reduced [plastocyanin] + hnu + oxidized [2Fe-2S]-[ferredoxin] = oxidized [plastocyanin] + reduced [2Fe-2S]-[ferredoxin]. Functionally, psaA and PsaB bind P700, the primary electron donor of photosystem I (PSI), as well as the electron acceptors A0, A1 and FX. PSI is a plastocyanin-ferredoxin oxidoreductase, converting photonic excitation into a charge separation, which transfers an electron from the donor P700 chlorophyll pair to the spectroscopically characterized acceptors A0, A1, FX, FA and FB in turn. Oxidized P700 is reduced on the lumenal side of the thylakoid membrane by plastocyanin. The polypeptide is Photosystem I P700 chlorophyll a apoprotein A2 (Pelargonium hortorum (Common geranium)).